The primary structure comprises 429 residues: Histidine--tRNA ligase (429 aa).

The protein belongs to the class-II aminoacyl-tRNA synthetase family. Homodimer.

The protein resides in the cytoplasm. The catalysed reaction is tRNA(His) + L-histidine + ATP = L-histidyl-tRNA(His) + AMP + diphosphate + H(+). In Rippkaea orientalis (strain PCC 8801 / RF-1) (Cyanothece sp. (strain PCC 8801)), this protein is Histidine--tRNA ligase.